The sequence spans 144 residues: Large ribosomal subunit protein uL13 (144 aa).

It belongs to the universal ribosomal protein uL13 family. As to quaternary structure, part of the 50S ribosomal subunit.

In terms of biological role, this protein is one of the early assembly proteins of the 50S ribosomal subunit, although it is not seen to bind rRNA by itself. It is important during the early stages of 50S assembly. In Mycoplasma mobile (strain ATCC 43663 / 163K / NCTC 11711) (Mesomycoplasma mobile), this protein is Large ribosomal subunit protein uL13.